Reading from the N-terminus, the 298-residue chain is Acetaldehyde dehydrogenase (298 aa).

Residue 6–9 (SGNI) participates in NAD(+) binding. The active-site Acyl-thioester intermediate is C121. Residues 152-160 (SAGPGTRAN) and N271 contribute to the NAD(+) site.

The protein belongs to the acetaldehyde dehydrogenase family.

The catalysed reaction is acetaldehyde + NAD(+) + CoA = acetyl-CoA + NADH + H(+). The protein is Acetaldehyde dehydrogenase of Mycobacterium avium (strain 104).